The primary structure comprises 227 residues: Cytochrome c oxidase subunit 2 (227 aa).

The Mitochondrial intermembrane segment spans residues 1 to 14; that stretch reads MAYPLQLGLQDATS. Residues 15-45 form a helical membrane-spanning segment; sequence PIMEELTSFHDHTLMIVFLISSLVLYIISSM. Residues 46 to 59 are Mitochondrial matrix-facing; sequence LTTKMTHTNTMDAQ. The chain crosses the membrane as a helical span at residues 60 to 87; that stretch reads GVETIWTILPAAILVLIALPSLRILYMM. Residues 88-227 are Mitochondrial intermembrane-facing; the sequence is DEINNPALTV…HFENWSASMI (140 aa). Cu cation contacts are provided by H161, C196, E198, C200, H204, and M207. E198 contributes to the Mg(2+) binding site.

It belongs to the cytochrome c oxidase subunit 2 family. Component of the cytochrome c oxidase (complex IV, CIV), a multisubunit enzyme composed of 14 subunits. The complex is composed of a catalytic core of 3 subunits MT-CO1, MT-CO2 and MT-CO3, encoded in the mitochondrial DNA, and 11 supernumerary subunits COX4I, COX5A, COX5B, COX6A, COX6B, COX6C, COX7A, COX7B, COX7C, COX8 and NDUFA4, which are encoded in the nuclear genome. The complex exists as a monomer or a dimer and forms supercomplexes (SCs) in the inner mitochondrial membrane with NADH-ubiquinone oxidoreductase (complex I, CI) and ubiquinol-cytochrome c oxidoreductase (cytochrome b-c1 complex, complex III, CIII), resulting in different assemblies (supercomplex SCI(1)III(2)IV(1) and megacomplex MCI(2)III(2)IV(2)). Found in a complex with TMEM177, COA6, COX18, COX20, SCO1 and SCO2. Interacts with TMEM177 in a COX20-dependent manner. Interacts with COX20. Interacts with COX16. It depends on Cu cation as a cofactor.

Its subcellular location is the mitochondrion inner membrane. It catalyses the reaction 4 Fe(II)-[cytochrome c] + O2 + 8 H(+)(in) = 4 Fe(III)-[cytochrome c] + 2 H2O + 4 H(+)(out). Functionally, component of the cytochrome c oxidase, the last enzyme in the mitochondrial electron transport chain which drives oxidative phosphorylation. The respiratory chain contains 3 multisubunit complexes succinate dehydrogenase (complex II, CII), ubiquinol-cytochrome c oxidoreductase (cytochrome b-c1 complex, complex III, CIII) and cytochrome c oxidase (complex IV, CIV), that cooperate to transfer electrons derived from NADH and succinate to molecular oxygen, creating an electrochemical gradient over the inner membrane that drives transmembrane transport and the ATP synthase. Cytochrome c oxidase is the component of the respiratory chain that catalyzes the reduction of oxygen to water. Electrons originating from reduced cytochrome c in the intermembrane space (IMS) are transferred via the dinuclear copper A center (CU(A)) of subunit 2 and heme A of subunit 1 to the active site in subunit 1, a binuclear center (BNC) formed by heme A3 and copper B (CU(B)). The BNC reduces molecular oxygen to 2 water molecules using 4 electrons from cytochrome c in the IMS and 4 protons from the mitochondrial matrix. This Acomys ignitus (Fiery spiny mouse) protein is Cytochrome c oxidase subunit 2 (MT-CO2).